A 501-amino-acid chain; its full sequence is Cytochrome P450 monooxygenase janQ (501 aa).

Residues 1-16 traverse the membrane as a helical segment; it reads MVLGLLAFIWLMRAWR. Asparagine 132 carries N-linked (GlcNAc...) asparagine glycosylation. Cysteine 439 is a heme binding site.

The protein belongs to the cytochrome P450 family. Requires heme as cofactor.

It localises to the membrane. The protein operates within secondary metabolite biosynthesis. Cytochrome P450 monooxygenase; part of the gene cluster that mediates the biosynthesis of the indole diterpenes janthitremanes such as shearinine K or shearinine A. The geranylgeranyl diphosphate (GGPP) synthase janG catalyzes the first step in janthitremane biosynthesis via conversion of farnesyl pyrophosphate and isopentyl pyrophosphate into geranylgeranyl pyrophosphate (GGPP). Condensation of indole-3-glycerol phosphate with GGPP by the prenyl transferase janC then forms 3-geranylgeranylindole (3-GGI). Epoxidation by the FAD-dependent monooxygenase janM leads to a epoxidized-GGI that is substrate of the terpene cyclase janB for cyclization to yield paspaline. Paspaline is subsequently converted to 13-desoxypaspaline by the cytochrome P450 monooxygenase janP, via beta-PC-M6 in a series of alpha-face oxidations. The cytochrome P450 monooxygenase janQ is proposed to carry out sequential beta-face oxidation steps at C-7 and C-13 of 13-desoxypaspaline to form paspalicine and paspalinine respectively. The indole diterpene prenyltransferase janD may then convert paspalinine into shearinine K which is substrate of janO and/or additional enzymes for oxidation and cyclization to generate shearinine A. The protein is Cytochrome P450 monooxygenase janQ of Penicillium janthinellum (Penicillium vitale).